The following is a 186-amino-acid chain: Photosystem I assembly protein Ycf4 (186 aa).

2 helical membrane-spanning segments follow: residues Trp-26–Phe-46 and Ile-66–Ile-86.

It belongs to the Ycf4 family.

The protein resides in the plastid. It localises to the chloroplast thylakoid membrane. Functionally, seems to be required for the assembly of the photosystem I complex. This Pyropia yezoensis (Susabi-nori) protein is Photosystem I assembly protein Ycf4.